The chain runs to 334 residues: Phospho-N-acetylmuramoyl-pentapeptide-transferase (334 aa).

A run of 10 helical transmembrane segments spans residues 11–31, 55–75, 84–104, 124–144, 158–178, 184–204, 205–225, 233–253, 258–278, and 311–331; these read GAGLTALAGALALGPVVIPLM, PTMGGVIFIIPAILATLIFAP, LIIALVLTVGHGLVGFADDYI, VGLAAVLGYGAVEVLGLGTAV, PLYYLLVLIMVWGTASAVNFA, LLGGLSVITFSFYGLVVALAL, GQTDMAVLGTALVGGVLGFLH, IFMGDVGSFALGGALAALAVL, FLLVIVGAVYVIEVISVILQV, and LFWGAGLLFTLLGWLVLPGML.

The protein belongs to the glycosyltransferase 4 family. MraY subfamily. The cofactor is Mg(2+).

It localises to the cell membrane. The catalysed reaction is UDP-N-acetyl-alpha-D-muramoyl-L-alanyl-gamma-D-glutamyl-meso-2,6-diaminopimeloyl-D-alanyl-D-alanine + di-trans,octa-cis-undecaprenyl phosphate = di-trans,octa-cis-undecaprenyl diphospho-N-acetyl-alpha-D-muramoyl-L-alanyl-D-glutamyl-meso-2,6-diaminopimeloyl-D-alanyl-D-alanine + UMP. Its pathway is cell wall biogenesis; peptidoglycan biosynthesis. Its function is as follows. Catalyzes the initial step of the lipid cycle reactions in the biosynthesis of the cell wall peptidoglycan: transfers peptidoglycan precursor phospho-MurNAc-pentapeptide from UDP-MurNAc-pentapeptide onto the lipid carrier undecaprenyl phosphate, yielding undecaprenyl-pyrophosphoryl-MurNAc-pentapeptide, known as lipid I. This is Phospho-N-acetylmuramoyl-pentapeptide-transferase from Symbiobacterium thermophilum (strain DSM 24528 / JCM 14929 / IAM 14863 / T).